The sequence spans 346 residues: Very-long-chain 3-oxoacyl-CoA reductase (346 aa).

The chain crosses the membrane as a helical span at residues 19 to 39 (LIYGVLFVGVYKITTFTLSVG). Residues Val65, Asp119, Asn146, Tyr220, Lys224, Val253, and Ser255 each coordinate NADP(+). Catalysis depends on Tyr220, which acts as the Proton donor. The Lowers pKa of active site Tyr role is filled by Lys224.

This sequence belongs to the short-chain dehydrogenases/reductases (SDR) family.

It localises to the endoplasmic reticulum membrane. It carries out the reaction a very-long-chain (3R)-3-hydroxyacyl-CoA + NADP(+) = a very-long-chain 3-oxoacyl-CoA + NADPH + H(+). It participates in lipid metabolism; fatty acid biosynthesis. Functionally, component of the microsomal membrane bound fatty acid elongation system, which produces the 26-carbon very long-chain fatty acids (VLCFA) from palmitate. Catalyzes the reduction of the 3-ketoacyl-CoA intermediate that is formed in each cycle of fatty acid elongation. VLCFAs serve as precursors for ceramide and sphingolipids. The chain is Very-long-chain 3-oxoacyl-CoA reductase from Debaryomyces hansenii (strain ATCC 36239 / CBS 767 / BCRC 21394 / JCM 1990 / NBRC 0083 / IGC 2968) (Yeast).